A 65-amino-acid polypeptide reads, in one-letter code: Large ribosomal subunit protein bL35 (65 aa).

A disordered region spans residues 23 to 44 (KRMKAGKQHILTKKSQKTKRNL).

Belongs to the bacterial ribosomal protein bL35 family.

The chain is Large ribosomal subunit protein bL35 from Lachnoclostridium phytofermentans (strain ATCC 700394 / DSM 18823 / ISDg) (Clostridium phytofermentans).